A 336-amino-acid polypeptide reads, in one-letter code: tRNA N6-adenosine threonylcarbamoyltransferase (336 aa).

Fe cation is bound by residues His-114 and His-118. Substrate-binding positions include 136-140 (LVSGG), Asp-169, Gly-182, Asp-186, and Asn-275. A Fe cation-binding site is contributed by Asp-301.

This sequence belongs to the KAE1 / TsaD family. It depends on Fe(2+) as a cofactor.

The protein resides in the cytoplasm. The catalysed reaction is L-threonylcarbamoyladenylate + adenosine(37) in tRNA = N(6)-L-threonylcarbamoyladenosine(37) in tRNA + AMP + H(+). Functionally, required for the formation of a threonylcarbamoyl group on adenosine at position 37 (t(6)A37) in tRNAs that read codons beginning with adenine. Is involved in the transfer of the threonylcarbamoyl moiety of threonylcarbamoyl-AMP (TC-AMP) to the N6 group of A37, together with TsaE and TsaB. TsaD likely plays a direct catalytic role in this reaction. In Streptococcus pneumoniae serotype 2 (strain D39 / NCTC 7466), this protein is tRNA N6-adenosine threonylcarbamoyltransferase.